Consider the following 702-residue polypeptide: Glucosidase 2 subunit beta (702 aa).

The signal sequence occupies residues 1-20; sequence MVSMFSLFLLLIEQSPLVAS. Asn145 carries N-linked (GlcNAc...) asparagine glycosylation. A coiled-coil region spans residues 163–228; the sequence is SYREGKEALE…LRGEYFNQLS (66 aa). 2 N-linked (GlcNAc...) asparagine glycosylation sites follow: Asn240 and Asn358. Residues 435 to 457 are disordered; that stretch reads PKVLPPDAVESEQDTNSDHIGTS. The stretch at 478–517 forms a coiled coil; the sequence is KDLVSLEKRFRSCESQVSLLENELKQKMDYKKLLDETEDE. N-linked (GlcNAc...) asparagine glycans are attached at residues Asn520 and Asn525. Positions 537 to 689 constitute an MRH domain; sequence SYCLDDILDN…DVVGPLGCNK (153 aa). Cystine bridges form between Cys539-Cys552, Cys646-Cys675, and Cys660-Cys687. Asn688 and Asn699 each carry an N-linked (GlcNAc...) asparagine glycan.

Heterodimer of a catalytic subunit alpha (ROT2) and a subunit beta (GTB1).

Its subcellular location is the endoplasmic reticulum. Functionally, subunit of glucosidase 2, which cleaves sequentially the 2 innermost alpha-1,3-linked glucose residues from the Glc(2)Man(9)GlcNAc(2) oligosaccharide precursor of immature glycoproteins. Specifically required for the cleavage of the final glucose. In Saccharomyces cerevisiae (strain ATCC 204508 / S288c) (Baker's yeast), this protein is Glucosidase 2 subunit beta (GTB1).